The following is a 553-amino-acid chain: MTKYVFVTGGVVSSLGKGIAAASLAAILESRGLKVTLLKLDPYINVDPGTMSPFQHGEVFVTEDGAETDLDLGHYERFISTKMRKANNFTTGQIYESVIRKERRGDYLGKTVQVIPHITNEIQAFVERGAASATCGEPDVAIVEVGGTVGDIESLPFLEAARQMSLRLGRNSACFVHLTLVPFIATAGELKTKPTQHSVQKLREIGIYPNVLLCRADRRIPDDERAKISMFSNVPEDAVISVWDVDSIYKIPQMLHDQGLDELICEELKLTARPADLSIWSEMVEKLENPKSEVTIGMVGKYVELTESYKSLIEALRHASIHTSTKVNIEYIDSEELEENGVDSLKHLDAVLVPGGFGRRGTEGKIKAIRYAREAKVPYLGICLGMQLAVIEFARDVVGLKDANSTEFDQDTPNRVVALITEWYDREGKVEKRTEESDLGGTMRLGSQRCPIKPGTMAEEIYGKDVNERHRHRYEVNNRFVPQLEGGGLIISARTPSEDLPEMMELPRSMHPWFVGVQFHPEFTSTPRDGHPLFKAFVEAARAHHEASVEEKV.

Positions 1–270 are amidoligase domain; sequence MTKYVFVTGG…DELICEELKL (270 aa). Ser-13 provides a ligand contact to CTP. Ser-13 is a UTP binding site. Residues 14 to 19 and Asp-71 each bind ATP; that span reads SLGKGI. Residues Asp-71 and Glu-144 each contribute to the Mg(2+) site. Residues 151-153, 191-196, and Lys-227 contribute to the CTP site; these read DIE and KTKPTQ. UTP contacts are provided by residues 191–196 and Lys-227; that span reads KTKPTQ. Positions 295 to 547 constitute a Glutamine amidotransferase type-1 domain; the sequence is TIGMVGKYVE…VEAARAHHEA (253 aa). Residue Gly-356 coordinates L-glutamine. Cys-383 (nucleophile; for glutamine hydrolysis) is an active-site residue. L-glutamine contacts are provided by residues 384 to 387, Glu-407, and Arg-473; that span reads LGMQ. Catalysis depends on residues His-520 and Glu-522.

It belongs to the CTP synthase family. Homotetramer.

The enzyme catalyses UTP + L-glutamine + ATP + H2O = CTP + L-glutamate + ADP + phosphate + 2 H(+). It catalyses the reaction L-glutamine + H2O = L-glutamate + NH4(+). It carries out the reaction UTP + NH4(+) + ATP = CTP + ADP + phosphate + 2 H(+). Its pathway is pyrimidine metabolism; CTP biosynthesis via de novo pathway; CTP from UDP: step 2/2. With respect to regulation, allosterically activated by GTP, when glutamine is the substrate; GTP has no effect on the reaction when ammonia is the substrate. The allosteric effector GTP functions by stabilizing the protein conformation that binds the tetrahedral intermediate(s) formed during glutamine hydrolysis. Inhibited by the product CTP, via allosteric rather than competitive inhibition. Functionally, catalyzes the ATP-dependent amination of UTP to CTP with either L-glutamine or ammonia as the source of nitrogen. Regulates intracellular CTP levels through interactions with the four ribonucleotide triphosphates. The chain is CTP synthase from Paraburkholderia phymatum (strain DSM 17167 / CIP 108236 / LMG 21445 / STM815) (Burkholderia phymatum).